The chain runs to 592 residues: Arginine--tRNA ligase (592 aa).

Residues 134–144 (ANPTGPLHVGH) carry the 'HIGH' region motif.

Belongs to the class-I aminoacyl-tRNA synthetase family. In terms of assembly, monomer.

It is found in the cytoplasm. The catalysed reaction is tRNA(Arg) + L-arginine + ATP = L-arginyl-tRNA(Arg) + AMP + diphosphate. The chain is Arginine--tRNA ligase from Coxiella burnetii (strain RSA 493 / Nine Mile phase I).